Here is an 810-residue protein sequence, read N- to C-terminus: Phospholipase D alpha 1 (810 aa).

Residues 1 to 126 form the C2 domain; the sequence is MAQHLLHGTL…INGEEVDQWV (126 aa). Position 187 (D187) interacts with Ca(2+). Residues 327 to 366 form the PLD phosphodiesterase 1 domain; the sequence is TMFTHHQKIVVVDSEMPSRGGSEMRRIVSFVGGIDLCDGR. Residues H332, K334, and D339 contribute to the active site. An a 1,2-diacyl-sn-glycero-3-phosphate-binding site is contributed by H332. Positions 372 and 406 each coordinate Ca(2+). A 1,2-diacyl-sn-glycero-3-phosphate is bound by residues Q522 and H661. One can recognise a PLD phosphodiesterase 2 domain in the interval 656–683; it reads FMIYVHTKMMIVDDEYIIIGSANINQRS. Catalysis depends on residues H661, K663, and D668. Ca(2+) is bound at residue E722.

Belongs to the phospholipase D family. C2-PLD subfamily. In terms of assembly, interacts with GPA1. This binding inhibits PLDALPHA1 activity and is relieved by GTP. It depends on Ca(2+) as a cofactor. As to expression, highly expressed in roots, stems and flowers, moderately in leaves, seedlings and siliques. Not detected in seeds.

The protein resides in the cytoplasm. It is found in the cell membrane. It localises to the mitochondrion membrane. Its subcellular location is the microsome membrane. The protein localises to the vacuole. The protein resides in the cytoplasmic vesicle. It is found in the clathrin-coated vesicle. It carries out the reaction a 1,2-diacyl-sn-glycero-3-phosphocholine + H2O = a 1,2-diacyl-sn-glycero-3-phosphate + choline + H(+). Its activity is regulated as follows. Not inhibited by neomycin. Its function is as follows. Hydrolyzes glycerol-phospholipids at the terminal phosphodiesteric bond to generate phosphatidic acids (PA). Plays an important role in various cellular processes, including phytohormone action and response to stress, characterized by acidification of the cell. Involved in wound induction of jasmonic acid. May be involved in membrane lipid remodeling. Probably involved in freezing tolerance by modulating the cold-responsive genes and accumulation of osmolytes. Can use phosphatidylcholine (PC), phosphatidylethanolamine (PE) and phosphatidylglycerol (PG) as substrates, both in presence or in absence of PIP2. Its main substrate is phosphatidylcholine. Stimulates the intrinsic GTPase activity of GPA1 upon binding. Mediates the abscisic acid effects on stomata through interaction with GPA1 and the production of phosphatidic acid that bind to ABI1. Involved in seed aging and deterioration. Involved in microtubule stabilization and salt tolerance. Involved in abscisic acid-induced stomatal closure. The polypeptide is Phospholipase D alpha 1 (Arabidopsis thaliana (Mouse-ear cress)).